A 162-amino-acid chain; its full sequence is SsrA-binding protein (162 aa).

A disordered region spans residues 140–162; it reads EDRRHDIKERETKREMDRAMRRR.

Belongs to the SmpB family.

The protein resides in the cytoplasm. In terms of biological role, required for rescue of stalled ribosomes mediated by trans-translation. Binds to transfer-messenger RNA (tmRNA), required for stable association of tmRNA with ribosomes. tmRNA and SmpB together mimic tRNA shape, replacing the anticodon stem-loop with SmpB. tmRNA is encoded by the ssrA gene; the 2 termini fold to resemble tRNA(Ala) and it encodes a 'tag peptide', a short internal open reading frame. During trans-translation Ala-aminoacylated tmRNA acts like a tRNA, entering the A-site of stalled ribosomes, displacing the stalled mRNA. The ribosome then switches to translate the ORF on the tmRNA; the nascent peptide is terminated with the 'tag peptide' encoded by the tmRNA and targeted for degradation. The ribosome is freed to recommence translation, which seems to be the essential function of trans-translation. The protein is SsrA-binding protein of Myxococcus xanthus (strain DK1622).